The following is a 170-amino-acid chain: Cathelicidin antimicrobial peptide (170 aa).

Residues 1 to 30 form the signal peptide; that stretch reads MKTQRDGPSLGRWSLVLLLLGLVMPLAIVA. The propeptide at 31–131 is cathelin-like domain (CLD); the sequence is QVLSYQEAVL…DISCDKDNRR (101 aa). Cystine bridges form between Cys-86/Cys-97 and Cys-108/Cys-125. The segment at 150-162 is active core; the sequence is LKKIGQKIKDFLG.

It belongs to the cathelicidin family. As to quaternary structure, monomer, homodimer or homotrimer (in vitro). Oligomerizes as tetra- or hexamer in solution (in vitro). Proteolytically cleaved by proteinase PRTN3 into antibacterial peptide LL-37. Proteolytically cleaved by cathepsin CTSG and neutrophil elastase ELANE. Post-translationally, resistant to proteolytic degradation in solution, and when bound to both zwitterionic (mimicking mammalian membranes) and negatively charged membranes (mimicking bacterial membranes). In terms of processing, after secretion onto the skin surface, the CAMP gene product is processed by a serine protease-dependent mechanism into multiple novel antimicrobial peptides distinct from and shorter than cathelicidin LL-37. These peptides show enhanced antimicrobial action, acquiring the ability to kill skin pathogens such as S.aureus, E.coli and C.albicans. These peptides have lost the ability to stimulate CXCL8/IL8 release from keratinocytes. The peptides act synergistically, killing bacteria at lower concentrations when present together, and maintain activity at increased salt condition.

It is found in the secreted. The protein resides in the vesicle. In terms of biological role, antimicrobial protein that is an integral component of the innate immune system. Binds to bacterial lipopolysaccharides (LPS). Acts via neutrophil N-formyl peptide receptors to enhance the release of CXCL2. Postsecretory processing generates multiple cathelicidin antimicrobial peptides with various lengths which act as a topical antimicrobial defense in sweat on skin. The unprocessed precursor form, cathelicidin antimicrobial peptide, inhibits the growth of Gram-negative E.coli and E.aerogenes with efficiencies comparable to that of the mature peptide LL-37 (in vitro). Antimicrobial peptide that is an integral component of the innate immune system. Binds to bacterial lipopolysaccharides (LPS). Causes membrane permeabilization by forming transmembrane pores (in vitro). Causes lysis of E.coli. Exhibits antimicrobial activity against Gram-negative bacteria such as P.aeruginosa, S.typhimurium, E.aerogenes, E.coli and P.syringae, Gram-positive bacteria such as L.monocytogenes, S.epidermidis, S.pyogenes and S.aureus, as well as vancomycin-resistant enterococci (in vitro). Exhibits antimicrobial activity against methicillin-resistant S.aureus, P.mirabilis, and C.albicans in low-salt media, but not in media containing 100 mM NaCl (in vitro). Forms chiral supramolecular assemblies with quinolone signal (PQS) molecules of P.aeruginosa, which may lead to interference of bacterial quorum signaling and perturbance of bacterial biofilm formation. May form supramolecular fiber-like assemblies on bacterial membranes. Induces cytokine and chemokine producation as well as TNF/TNFA and CSF2/GMCSF production in normal human keratinocytes. Exhibits hemolytic activity against red blood cells. Its function is as follows. Exhibits antimicrobial activity against E.coli and B.megaterium (in vitro). This chain is Cathelicidin antimicrobial peptide, found in Chlorocebus aethiops (Green monkey).